Consider the following 547-residue polypeptide: MDPMELRNVNIEPDDESSSGESVPDSYIGIGNSEKAAMSSQFANEDAESQKFLTNGFLGKKKLADYGDEHHPGTTSFGMSSFNLSNAIMGSGILGLSYAMANTGIILFIIMLLAVAILSLYSVHLLLKTAKEGGSLIYEKLGEKAFGWPGKIGAFISITMQNIGAMSSYLFIIKYELPEVIRAFMGLEENTGEWYPNGNYLIVFVSLGIILPLSLLKNLGYLGYTSGFSLTCMVFFVSVVIYKKFQIPCPLPVLDHSVGNLSFNNTLSMHVVMLPNNSESSDVNFMMDYTHRNPAGLDENKAKGSLHDSGVEYEAHSDDKCQPKYFVFNSRTAYAIPILAFAFVCHPEVLPIYSELKDRSRRKMQTVSNISITGMLVMYLLAALFGYLTFYGEVEDELLHAYSKVYTFDIPLLMVRLAVLVAVTLTVPIVLFPIRTSVTTLLFPKRPFSWIRHFLIAAVLIALNNVLVILVPTIKYIFGFIGASSATMLIFILPAVFYLKLVKKESFRSPQKVGALIFLVVGIIFMIGSMALIIIDWIYDPPNSKHH.

The disordered stretch occupies residues 1–26 (MDPMELRNVNIEPDDESSSGESVPDS). Topologically, residues 1 to 104 (MDPMELRNVN…GLSYAMANTG (104 aa)) are extracellular. The residue at position 49 (Ser49) is a Phosphoserine. A helical membrane pass occupies residues 105-125 (IILFIIMLLAVAILSLYSVHL). Topologically, residues 126–151 (LLKTAKEGGSLIYEKLGEKAFGWPGK) are cytoplasmic. Residues 152-172 (IGAFISITMQNIGAMSSYLFI) traverse the membrane as a helical segment. At 173-195 (IKYELPEVIRAFMGLEENTGEWY) the chain is on the extracellular side. The chain crosses the membrane as a helical span at residues 196-216 (PNGNYLIVFVSLGIILPLSLL). The Cytoplasmic segment spans residues 217–220 (KNLG). A helical transmembrane segment spans residues 221–241 (YLGYTSGFSLTCMVFFVSVVI). Residues 242–332 (YKKFQIPCPL…PKYFVFNSRT (91 aa)) are Extracellular-facing. Cysteines 249 and 321 form a disulfide. N-linked (GlcNAc...) asparagine glycans are attached at residues Asn260, Asn264, and Asn276. The chain crosses the membrane as a helical span at residues 333–353 (AYAIPILAFAFVCHPEVLPIY). Topologically, residues 354 to 369 (SELKDRSRRKMQTVSN) are cytoplasmic. The helical transmembrane segment at 370–390 (ISITGMLVMYLLAALFGYLTF) threads the bilayer. Residues 391 to 411 (YGEVEDELLHAYSKVYTFDIP) are Extracellular-facing. The helical transmembrane segment at 412–432 (LLMVRLAVLVAVTLTVPIVLF) threads the bilayer. The Cytoplasmic segment spans residues 433–453 (PIRTSVTTLLFPKRPFSWIRH). Residues 454-474 (FLIAAVLIALNNVLVILVPTI) form a helical membrane-spanning segment. The Extracellular portion of the chain corresponds to 475–476 (KY). Residues 477–497 (IFGFIGASSATMLIFILPAVF) form a helical membrane-spanning segment. At 498–514 (YLKLVKKESFRSPQKVG) the chain is on the cytoplasmic side. Residues 515-535 (ALIFLVVGIIFMIGSMALIII) traverse the membrane as a helical segment. At 536 to 547 (DWIYDPPNSKHH) the chain is on the extracellular side.

Belongs to the amino acid/polyamine transporter 2 family. Post-translationally, the disulfide bond plays an important role in substrate transport, but has no effect on trafficking to the cell surface.

Its subcellular location is the cell membrane. The protein resides in the cell projection. It is found in the microvillus membrane. It catalyses the reaction L-methionine(in) + Na(+)(in) = L-methionine(out) + Na(+)(out). It carries out the reaction L-asparagine(in) + Na(+)(in) = L-asparagine(out) + Na(+)(out). The enzyme catalyses L-threonine(in) + Na(+)(in) = L-threonine(out) + Na(+)(out). The catalysed reaction is L-serine(in) + Na(+)(in) = L-serine(out) + Na(+)(out). It catalyses the reaction glycine(in) + Na(+)(in) = glycine(out) + Na(+)(out). It carries out the reaction L-alanine(in) + Na(+)(in) = L-alanine(out) + Na(+)(out). The enzyme catalyses L-glutamine(in) + Na(+)(in) = L-glutamine(out) + Na(+)(out). The catalysed reaction is L-histidine(in) + Na(+)(in) = L-histidine(out) + Na(+)(out). It catalyses the reaction L-cysteine(in) + Na(+)(in) = L-cysteine(out) + Na(+)(out). It carries out the reaction L-proline(in) + Na(+)(in) = L-proline(out) + Na(+)(out). Functionally, symporter that cotransports neutral amino acids and sodium ions from the extraccellular to the intracellular side of the cell membrane. The transport is electrogenic, pH dependent and partially tolerates substitution of Na(+) by Li(+). Preferentially transports smaller amino acids, such as glycine, L-alanine, L-serine, L-asparagine and L-threonine, followed by L-cysteine, L-histidine, L-proline and L-glutamine and L-methionine. The sequence is that of Sodium-coupled neutral amino acid transporter 4 from Pongo abelii (Sumatran orangutan).